The primary structure comprises 167 residues: Acetolactate synthase small subunit (167 aa).

One can recognise an ACT domain in the interval threonine 7–aspartate 81.

Belongs to the acetolactate synthase small subunit family. As to quaternary structure, dimer of large and small chains.

The enzyme catalyses 2 pyruvate + H(+) = (2S)-2-acetolactate + CO2. Its pathway is amino-acid biosynthesis; L-isoleucine biosynthesis; L-isoleucine from 2-oxobutanoate: step 1/4. It functions in the pathway amino-acid biosynthesis; L-valine biosynthesis; L-valine from pyruvate: step 1/4. The sequence is that of Acetolactate synthase small subunit (ilvH) from Mycobacterium avium.